A 337-amino-acid chain; its full sequence is Protein XAP5 CIRCADIAN TIMEKEEPER (337 aa).

Ser2 is modified (N-acetylserine). 2 coiled-coil regions span residues 13–41 (QDAV…KSAS) and 72–121 (TREE…GSSR). Over residues 23–37 (KQREAERKKIQELKS) the composition is skewed to basic and acidic residues. Residues 23–47 (KQREAERKKIQELKSKSASGNDQSG) are disordered. Over residues 38-47 (KSASGNDQSG) the composition is skewed to polar residues. Positions 125-174 (AEDFENGSDEDDGENKSSGTGNLRCGKLGKDPSVETNFLPDSEREAEEQA) are disordered. Positions 126-137 (EDFENGSDEDDG) are enriched in acidic residues. Position 132 is a phosphoserine (Ser132). Residues 165-174 (DSEREAEEQA) show a composition bias toward basic and acidic residues.

The protein belongs to the FAM50 family. In terms of tissue distribution, expressed in leaves stems, flowers, roots, trichomes and hypocotyls.

The protein localises to the nucleus. In terms of biological role, involved in light regulation of the circadian clock and photomorphogenesis. May play a global role in coordinating growth in response to the light environment. Acts as a light quality sensor directing both negative and positive transcriptional regulation. Inhibits growth in red light but promote growth in blue light. Inhibits clock gene expression in diurnal cycles. Plays no role in the control of flowering time. The protein is Protein XAP5 CIRCADIAN TIMEKEEPER (XCT) of Arabidopsis thaliana (Mouse-ear cress).